The primary structure comprises 497 residues: Glycerol kinase (497 aa).

Threonine 13 provides a ligand contact to ADP. ATP is bound by residues threonine 13, threonine 14, and serine 15. Threonine 13 is a binding site for sn-glycerol 3-phosphate. Residue arginine 17 participates in ADP binding. Sn-glycerol 3-phosphate is bound by residues arginine 83, glutamate 84, and tyrosine 135. The glycerol site is built by arginine 83, glutamate 84, and tyrosine 135. Histidine 231 is modified (phosphohistidine; by HPr). Residue aspartate 245 participates in sn-glycerol 3-phosphate binding. Aspartate 245 and glutamine 246 together coordinate glycerol. Residues threonine 267 and glycine 310 each coordinate ADP. The ATP site is built by threonine 267, glycine 310, glutamine 314, and glycine 411. Positions 411 and 415 each coordinate ADP.

It belongs to the FGGY kinase family. In terms of assembly, homotetramer and homodimer (in equilibrium). The phosphoenolpyruvate-dependent sugar phosphotransferase system (PTS), including enzyme I, and histidine-containing protein (HPr) are required for the phosphorylation, which leads to the activation of the enzyme.

It catalyses the reaction glycerol + ATP = sn-glycerol 3-phosphate + ADP + H(+). It participates in polyol metabolism; glycerol degradation via glycerol kinase pathway; sn-glycerol 3-phosphate from glycerol: step 1/1. With respect to regulation, activated by phosphorylation and inhibited by fructose 1,6-bisphosphate (FBP). Its function is as follows. Key enzyme in the regulation of glycerol uptake and metabolism. Catalyzes the phosphorylation of glycerol to yield sn-glycerol 3-phosphate. In Halalkalibacterium halodurans (strain ATCC BAA-125 / DSM 18197 / FERM 7344 / JCM 9153 / C-125) (Bacillus halodurans), this protein is Glycerol kinase.